The following is a 278-amino-acid chain: MLPLLRCVPRSLGAASGLRTAIPAQPLRHLLQPAPRPCLRPFGLLSVRAGSARRSGLLQPPVPCACGCGALHTEGDKAFVEFLTDEIKEEKKIQKHKSLPKMSGDWELEVNGTEAKLLRKVAGEKITVTFNINNSIPPTFDGEEEPSQGQKAEEQEPERTSTPNFVVEVTKTDGKKTLVLDCHYPEDEIGHEDEAESDIFSIKEVSFQATGDSEWRDTNYTLNTDSLDWALYDHLMDFLADRGVDNTFADELVELSTALEHQEYITFLEDLKSFVKNQ.

The transit peptide at Met1–Ala70 directs the protein to the mitochondrion. Residues Thr73–Glu90 form a C1q binding region. An N6-acetyllysine mark is found at Lys88 and Lys91. Positions Asn133–Thr162 are disordered. The interaction with MAVS stretch occupies residues Phe165–Ala209. Tyr184 bears the Phosphotyrosine mark. 2 positions are modified to phosphoserine: Ser197 and Ser201. Residue Thr210 is modified to Phosphothreonine.

Belongs to the MAM33 family. In terms of assembly, homotrimer; three monomers form a donut-shaped structure with an unusually asymmetric charge distribution on the surface. Interacts with CDK13, HRK, VTN, NFYB, ADRA1B, FOXC1, DDX21, DDX50, NCL, SRSF1 and SRSF9. Interacts with CD93; the association may represent a cell surface C1q receptor. Interacts with KRT1; the association represents a cell surface kininogen receptor. Interacts with CD209; the interaction is indicative for a C1q:C1QBP:CD209 signaling complex. Interacts with FBL and RRP1; the respective interactions with C1QBP are competitive. Probably associates with the mitoribosome. Interacts with MAVS; the interaction occurs upon viral transfection. Interacts with PPIF. Interacts with U2AF1L4. Interacts with PLEKHN1. Interacts with VGF-derived peptide TLQP-21. Interacts with MRE11 and RAD50; forming the MRC (MRE11-RAD50-C1QBP) complex that inhibits the activity of MRE11. Ubiquitous.

It is found in the mitochondrion matrix. The protein resides in the nucleus. It localises to the cell membrane. The protein localises to the secreted. Its subcellular location is the cytoplasm. It is found in the nucleolus. Its function is as follows. Is believed to be a multifunctional and multicompartmental protein involved in inflammation and infection processes, ribosome biogenesis, protein synthesis in mitochondria, regulation of apoptosis, transcriptional regulation and pre-mRNA splicing. At the cell surface is thought to act as an endothelial receptor for plasma proteins of the complement and kallikrein-kinin cascades. Putative receptor for C1q; specifically binds to the globular 'heads' of C1q thus inhibiting C1; may perform the receptor function through a complex with C1qR/CD93. In complex with cytokeratin-1/KRT1 is a high affinity receptor for kininogen-1/HMWK. Can also bind other plasma proteins, such as coagulation factor XII leading to its autoactivation. May function to bind initially fluid kininogen-1 to the cell membrane. The secreted form may enhance both extrinsic and intrinsic coagulation pathways. It is postulated that the cell surface form requires docking with transmembrane proteins for downstream signaling which might be specific for a cell-type or response. By acting as C1q receptor is involved in chemotaxis of immature dendritic cells and neutrophils and is proposed to signal through CD209/DC-SIGN on immature dendritic cells, through integrin alpha-4/beta-1 during trophoblast invasion of the decidua, and through integrin beta-1 during endothelial cell adhesion and spreading. Signaling involved in inhibition of innate immune response is implicating the PI3K-AKT/PKB pathway. Required for protein synthesis in mitochondria. In mitochondrial translation may be involved in formation of functional 55S mitoribosomes; the function seems to involve its RNA-binding activity. Acts as a RNA modification reader, which specifically recognizes and binds mitochondrial RNAs modified by C5-methylcytosine (m5C) in response to stress, and promotes recruitment of the mitochondrial degradosome complex, leading to their degradation. May be involved in the nucleolar ribosome maturation process; the function may involve the exchange of FBL for RRP1 in the association with pre-ribosome particles. Involved in regulation of RNA splicing by inhibiting the RNA-binding capacity of SRSF1 and its phosphorylation. Is required for the nuclear translocation of splicing factor U2AF1L4. Involved in regulation of CDKN2A- and HRK-mediated apoptosis. May be involved in regulation of FOXC1 transcriptional activity and NFY/CCAAT-binding factor complex-mediated transcription. May play a role in antibacterial defense. Acts as a regulator of DNA repair via homologous recombination by inhibiting the activity of MRE11: interacts with unphosphorylated MRE11 and RAD50 in absence of DNA damage, preventing formation and activity of the MRN complex. Following DNA damage, dissociates from phosphorylated MRE11, allowing formation of the MRN complex. The polypeptide is Complement component 1 Q subcomponent-binding protein, mitochondrial (C1qbp) (Mus musculus (Mouse)).